A 165-amino-acid polypeptide reads, in one-letter code: 3-isopropylmalate dehydratase small subunit (165 aa).

It belongs to the LeuD family. LeuD type 2 subfamily. In terms of assembly, heterodimer of LeuC and LeuD.

It catalyses the reaction (2R,3S)-3-isopropylmalate = (2S)-2-isopropylmalate. It functions in the pathway amino-acid biosynthesis; L-leucine biosynthesis; L-leucine from 3-methyl-2-oxobutanoate: step 2/4. Its function is as follows. Catalyzes the isomerization between 2-isopropylmalate and 3-isopropylmalate, via the formation of 2-isopropylmaleate. The protein is 3-isopropylmalate dehydratase small subunit of Saccharolobus islandicus (strain Y.G.57.14 / Yellowstone #1) (Sulfolobus islandicus).